The sequence spans 852 residues: Patatin-like phospholipase domain-containing protein CaO19.1504 (852 aa).

Residues 41–52 (ATTDITTTPIND) show a composition bias toward low complexity. Residues 41–184 (ATTDITTTPI…KKTTPTSSTS (144 aa)) form a disordered region. Polar residues predominate over residues 75-95 (INGTVSDSSSITDEDIMNSSY). Residues 101–110 (SSTNLKSNST) show a composition bias toward low complexity. Over residues 113–122 (DDDDDDDDDD) the composition is skewed to acidic residues. Low complexity-rich tracts occupy residues 129–142 (SGTTDNTSTTSLSS) and 158–171 (GGSRSSSSSKKGSS). Residues 207-227 (WPILIFVFSWIGILGIFYFMI) traverse the membrane as a helical segment. One can recognise a PNPLA domain in the interval 396-588 (LCLSGGACFA…RTDIPIEALN (193 aa)). Residues 427-431 (GTSGG) carry the GXSXG motif. Residue S429 is the Nucleophile of the active site. Catalysis depends on D575, which acts as the Proton acceptor. Residues 800–840 (KKLLDELDNEDEEEDEEEEEVDVDDDDDDDDDSLSDSFEIT) are disordered. Acidic residues predominate over residues 805–833 (ELDNEDEEEDEEEEEVDVDDDDDDDDDSL).

It belongs to the PLPL family.

The protein resides in the membrane. Its function is as follows. Probable lipid hydrolase. The protein is Patatin-like phospholipase domain-containing protein CaO19.1504 of Candida albicans (strain SC5314 / ATCC MYA-2876) (Yeast).